The chain runs to 101 residues: Large ribosomal subunit protein uL23 (101 aa).

It belongs to the universal ribosomal protein uL23 family. Part of the 50S ribosomal subunit. Contacts protein L29, and trigger factor when it is bound to the ribosome.

One of the early assembly proteins it binds 23S rRNA. One of the proteins that surrounds the polypeptide exit tunnel on the outside of the ribosome. Forms the main docking site for trigger factor binding to the ribosome. The chain is Large ribosomal subunit protein uL23 from Rhodococcus erythropolis (strain PR4 / NBRC 100887).